Reading from the N-terminus, the 196-residue chain is Carnitine operon protein CaiE (196 aa).

A disordered region spans residues 174–196 (QPLRQMEENRPRLQGTTDVTPKR). A compositionally biased stretch (polar residues) spans 187–196 (QGTTDVTPKR).

Belongs to the transferase hexapeptide repeat family.

It functions in the pathway amine and polyamine metabolism; carnitine metabolism. Its function is as follows. Overproduction of CaiE stimulates the activity of CaiB and CaiD. This chain is Carnitine operon protein CaiE (caiE), found in Escherichia coli (strain K12).